Here is a 53-residue protein sequence, read N- to C-terminus: Small polypeptide DEVIL 7 (53 aa).

Basic and acidic residues predominate over residues 1 to 16 (MREKYTKEEAVKNWEK). A disordered region spans residues 1–28 (MREKYTKEEAVKNWEKKKNKPSSPKGVG). The tract at residues 22 to 53 (SSPKGVGEFLKKKKGRFYIIGKCITMLLCSHK) is required for DVL/RTFL small polypeptide activity. Residues 30 to 46 (FLKKKKGRFYIIGKCIT) form a helical membrane-spanning segment.

It belongs to the DVL/RTFL small polypeptides family.

Its subcellular location is the cell membrane. Functionally, small polypeptide acting as a regulatory molecule which coordinates cellular responses required for differentiation, growth and development, probably by restricting polar cell proliferation in lateral organs and coordinating socket cell recruitment and differentiation at trichome sites. The polypeptide is Small polypeptide DEVIL 7 (Arabidopsis thaliana (Mouse-ear cress)).